The primary structure comprises 72 residues: Translation initiation factor IF-1 (72 aa).

The S1-like domain maps to M1–R72.

The protein belongs to the IF-1 family. As to quaternary structure, component of the 30S ribosomal translation pre-initiation complex which assembles on the 30S ribosome in the order IF-2 and IF-3, IF-1 and N-formylmethionyl-tRNA(fMet); mRNA recruitment can occur at any time during PIC assembly.

Its subcellular location is the cytoplasm. Its function is as follows. One of the essential components for the initiation of protein synthesis. Stabilizes the binding of IF-2 and IF-3 on the 30S subunit to which N-formylmethionyl-tRNA(fMet) subsequently binds. Helps modulate mRNA selection, yielding the 30S pre-initiation complex (PIC). Upon addition of the 50S ribosomal subunit IF-1, IF-2 and IF-3 are released leaving the mature 70S translation initiation complex. In Shewanella frigidimarina (strain NCIMB 400), this protein is Translation initiation factor IF-1.